A 164-amino-acid chain; its full sequence is Peptidyl-prolyl cis-trans isomerase A (164 aa).

Methionine 1 is modified (N-acetylmethionine). Valine 2 is subject to N-acetylvaline; in Peptidyl-prolyl cis-trans isomerase A, N-terminally processed. Positions 7–163 constitute a PPIase cyclophilin-type domain; it reads FFDIAVDGEP…KKITIADCGQ (157 aa). Lysine 28 is modified (N6-acetyllysine; alternate). Lysine 28 is covalently cross-linked (Glycyl lysine isopeptide (Lys-Gly) (interchain with G-Cter in SUMO2); alternate). Lysine 28 is covalently cross-linked (Glycyl lysine isopeptide (Lys-Gly) (interchain with G-Cter in ubiquitin); alternate). An N6-acetyllysine mark is found at lysine 44 and lysine 76. Cysteine 62 and cysteine 161 are joined by a disulfide. Phosphoserine is present on serine 77. At lysine 82 the chain carries N6-acetyllysine; alternate. A Glycyl lysine isopeptide (Lys-Gly) (interchain with G-Cter in SUMO2); alternate cross-link involves residue lysine 82. The residue at position 93 (threonine 93) is a Phosphothreonine. A glycan (N-linked (GlcNAc...) asparagine) is linked at asparagine 108. Lysine 125, lysine 131, and lysine 133 each carry N6-acetyllysine.

It belongs to the cyclophilin-type PPIase family. PPIase A subfamily. Interacts with protein phosphatase PPP3CA/calcineurin A. Interacts with isoform 2 of BSG/CD147. Interacts with FOXO1; the interaction promotes FOXO1 dephosphorylation, nuclear accumulation and transcriptional activity. Interacts with integrin ITGA2B:ITGB3; the interaction is ROS and peptidyl-prolyl cis-trans isomerase (PPIase) activity-dependent and is increased in the presence of thrombin. Interacts with MAP3K5. Interacts with TARDBP; the interaction is dependent on the RNA-binding activity of TARDBP and the PPIase activity of PPIA/CYPA and the acetylation of PPIA/CYPA at Lys-125 favors the interaction. Interacts with HNRNPA1, HNRNPA2B1, HNRNPC, RBMX, HNRNPK and HNRNPM. In terms of processing, acetylation at Lys-125 markedly inhibits catalysis of cis to trans isomerization. PPIA acetylation also antagonizes the immunosuppressive effects of cyclosporine by inhibiting the sequential steps of cyclosporine binding and calcineurin inhibition. Acetylation at Lys-125 favors the interaction with TARDBP.

Its subcellular location is the cytoplasm. It is found in the secreted. The protein resides in the nucleus. It carries out the reaction [protein]-peptidylproline (omega=180) = [protein]-peptidylproline (omega=0). With respect to regulation, binds cyclosporin A (CsA). CsA mediates some of its effects via an inhibitory action on PPIase. Its function is as follows. Catalyzes the cis-trans isomerization of proline imidic peptide bonds in oligopeptides. Exerts a strong chemotactic effect on leukocytes partly through activation of one of its membrane receptors BSG/CD147, initiating a signaling cascade that culminates in MAPK/ERK activation. Activates endothelial cells (ECs) in a proinflammatory manner by stimulating activation of NF-kappa-B and ERK, JNK and p38 MAP-kinases and by inducing expression of adhesion molecules including SELE and VCAM1. Induces apoptosis in ECs by promoting the FOXO1-dependent expression of CCL2 and BCL2L11 which are involved in EC chemotaxis and apoptosis. In response to oxidative stress, initiates proapoptotic and antiapoptotic signaling in ECs via activation of NF-kappa-B and AKT1 and up-regulation of antiapoptotic protein BCL2. Negatively regulates MAP3K5/ASK1 kinase activity, autophosphorylation and oxidative stress-induced apoptosis mediated by MAP3K5/ASK1. Necessary for the assembly of TARDBP in heterogeneous nuclear ribonucleoprotein (hnRNP) complexes and regulates TARDBP binding to RNA UG repeats and TARDBP-dependent expression of HDAC6, ATG7 and VCP which are involved in clearance of protein aggregates. Plays an important role in platelet activation and aggregation. Regulates calcium mobilization and integrin ITGA2B:ITGB3 bidirectional signaling via increased ROS production as well as by facilitating the interaction between integrin and the cell cytoskeleton. Binds heparan sulfate glycosaminoglycans. This is Peptidyl-prolyl cis-trans isomerase A (PPIA) from Bos taurus (Bovine).